A 140-amino-acid polypeptide reads, in one-letter code: Ribosome-binding factor A (140 aa).

The tract at residues 1 to 23 (MLRDRNRSGVRGGAEGPSQRQRR) is disordered.

The protein belongs to the RbfA family. In terms of assembly, monomer. Binds 30S ribosomal subunits, but not 50S ribosomal subunits or 70S ribosomes.

It is found in the cytoplasm. Functionally, one of several proteins that assist in the late maturation steps of the functional core of the 30S ribosomal subunit. Associates with free 30S ribosomal subunits (but not with 30S subunits that are part of 70S ribosomes or polysomes). Required for efficient processing of 16S rRNA. May interact with the 5'-terminal helix region of 16S rRNA. The polypeptide is Ribosome-binding factor A (Acidiphilium cryptum (strain JF-5)).